Consider the following 227-residue polypeptide: Eukaryotic translation initiation factor NCBP (227 aa).

Over residues 1–22 (MEPAAEKREAEQEELQQQHDEP) the composition is skewed to basic and acidic residues. The interval 1–43 (MEPAAEKREAEQEELQQQHDEPAVPSADDDEAEAEENERRNRE) is disordered. Residues 27–36 (ADDDEAEAEE) show a composition bias toward acidic residues.

This sequence belongs to the eukaryotic initiation factor 4E family. EIF4F is a multi-subunit complex, the composition of which varies with external and internal environmental conditions. It is composed of at least EIF4A, EIF4E and EIF4G. EIF4E is also known to interact with other partners. In higher plants two isoforms of EIF4F have been identified, named isoform EIF4F and isoform EIF(iso)4F. Isoform EIF4F has subunits p220 and p26, whereas isoform EIF(iso)4F has subunits p82 and p28.

Recognizes and binds the 7-methylguanosine-containing mRNA cap during an early step in the initiation of protein synthesis and facilitates ribosome binding by inducing the unwinding of the mRNAs secondary structures. The sequence is that of Eukaryotic translation initiation factor NCBP (NCBP) from Oryza sativa subsp. japonica (Rice).